Reading from the N-terminus, the 257-residue chain is Type III pantothenate kinase (257 aa).

5–12 is an ATP binding site; it reads DIGNTNIK. 107–110 serves as a coordination point for substrate; the sequence is GSDR. Asp-109 serves as the catalytic Proton acceptor. Thr-133 lines the ATP pocket.

This sequence belongs to the type III pantothenate kinase family. As to quaternary structure, homodimer. NH4(+) is required as a cofactor. Requires K(+) as cofactor.

It is found in the cytoplasm. It catalyses the reaction (R)-pantothenate + ATP = (R)-4'-phosphopantothenate + ADP + H(+). Its pathway is cofactor biosynthesis; coenzyme A biosynthesis; CoA from (R)-pantothenate: step 1/5. Catalyzes the phosphorylation of pantothenate (Pan), the first step in CoA biosynthesis. In Ehrlichia ruminantium (strain Welgevonden), this protein is Type III pantothenate kinase.